A 148-amino-acid polypeptide reads, in one-letter code: Transcriptional regulator MraZ (148 aa).

2 consecutive SpoVT-AbrB domains span residues 5 to 53 (ETAI…VEKE) and 82 to 125 (SALL…SEQA).

This sequence belongs to the MraZ family. Forms oligomers.

Its subcellular location is the cytoplasm. It is found in the nucleoid. This chain is Transcriptional regulator MraZ, found in Xylella fastidiosa (strain 9a5c).